A 508-amino-acid polypeptide reads, in one-letter code: uncharacterized protein (508 aa).

A Resolvase/invertase-type recombinase catalytic domain is found at 3 to 163 (KAIAYMRFSS…LSWKKKRQDA (161 aa)). Ser11 functions as the O-(5'-phospho-DNA)-serine intermediate in the catalytic mechanism. The recombinase DNA-binding region spans 175–290 (PRWLSLDDKR…QEIRLAPFGI (116 aa)).

This is an uncharacterized protein from Escherichia coli (strain K12).